The following is a 359-amino-acid chain: Membrane-bound lytic murein transglycosylase C (359 aa).

A signal peptide spans 1-16 (MKKYLALALIAPLLIS). Cysteine 17 carries N-palmitoyl cysteine lipidation. The S-diacylglycerol cysteine moiety is linked to residue cysteine 17.

Belongs to the transglycosylase Slt family.

The protein localises to the cell outer membrane. The catalysed reaction is Exolytic cleavage of the (1-&gt;4)-beta-glycosidic linkage between N-acetylmuramic acid (MurNAc) and N-acetylglucosamine (GlcNAc) residues in peptidoglycan, from either the reducing or the non-reducing ends of the peptidoglycan chains, with concomitant formation of a 1,6-anhydrobond in the MurNAc residue.. In terms of biological role, murein-degrading enzyme. May play a role in recycling of muropeptides during cell elongation and/or cell division. This chain is Membrane-bound lytic murein transglycosylase C, found in Escherichia coli (strain SE11).